Here is a 342-residue protein sequence, read N- to C-terminus: N-alpha-acetyl-L-2,4-diaminobutyric acid deacetylase (342 aa).

The segment at 103–124 (TAGRRTSPMDGGNLNRSFPGDP) is disordered.

This sequence belongs to the DoeB deacetylase family. Zn(2+) is required as a cofactor.

The protein resides in the cytoplasm. It catalyses the reaction (2S)-2-acetamido-4-aminobutanoate + H2O = L-2,4-diaminobutanoate + acetate. In terms of biological role, involved in the degradation of ectoine, which allows H.elongata to utilize ectoine as both a carbon and a nitrogen source for growth. Catalyzes the deacetylation of N-alpha-acetyl-L-2,4-diaminobutyrate (N-alpha-Ac-DABA) to yield L-2,4-diaminobutyrate (DABA). The polypeptide is N-alpha-acetyl-L-2,4-diaminobutyric acid deacetylase (Halomonas elongata (strain ATCC 33173 / DSM 2581 / NBRC 15536 / NCIMB 2198 / 1H9)).